A 182-amino-acid polypeptide reads, in one-letter code: ATP-dependent protease subunit HslV (182 aa).

Thr-12 is a catalytic residue. Na(+) contacts are provided by Ala-167, Cys-170, and Thr-173.

This sequence belongs to the peptidase T1B family. HslV subfamily. In terms of assembly, a double ring-shaped homohexamer of HslV is capped on each side by a ring-shaped HslU homohexamer. The assembly of the HslU/HslV complex is dependent on binding of ATP.

The protein localises to the cytoplasm. It catalyses the reaction ATP-dependent cleavage of peptide bonds with broad specificity.. With respect to regulation, allosterically activated by HslU binding. Functionally, protease subunit of a proteasome-like degradation complex believed to be a general protein degrading machinery. The chain is ATP-dependent protease subunit HslV from Chlorobium luteolum (strain DSM 273 / BCRC 81028 / 2530) (Pelodictyon luteolum).